A 185-amino-acid chain; its full sequence is TATA-box-binding protein (185 aa).

A run of 2 repeats spans residues 8 to 84 and 99 to 175.

This sequence belongs to the TBP family.

In terms of biological role, general factor that plays a role in the activation of archaeal genes transcribed by RNA polymerase. Binds specifically to the TATA box promoter element which lies close to the position of transcription initiation. The protein is TATA-box-binding protein of Thermococcus sibiricus (strain DSM 12597 / MM 739).